We begin with the raw amino-acid sequence, 351 residues long: Dihydroorotate dehydrogenase (quinone) (351 aa).

Residues 65–69 (AGLDK) and threonine 89 each bind FMN. Lysine 69 contributes to the substrate binding site. Residue 114–118 (NRLGF) participates in substrate binding. 2 residues coordinate FMN: asparagine 150 and asparagine 183. Residue asparagine 183 participates in substrate binding. Catalysis depends on serine 186, which acts as the Nucleophile. A substrate-binding site is contributed by asparagine 188. FMN contacts are provided by lysine 228 and threonine 256. A substrate-binding site is contributed by 257-258 (NT). Residues glycine 279, glycine 308, and 329–330 (YT) each bind FMN.

This sequence belongs to the dihydroorotate dehydrogenase family. Type 2 subfamily. Monomer. FMN is required as a cofactor.

The protein resides in the cell membrane. The catalysed reaction is (S)-dihydroorotate + a quinone = orotate + a quinol. Its pathway is pyrimidine metabolism; UMP biosynthesis via de novo pathway; orotate from (S)-dihydroorotate (quinone route): step 1/1. Catalyzes the conversion of dihydroorotate to orotate with quinone as electron acceptor. The chain is Dihydroorotate dehydrogenase (quinone) from Acidovorax sp. (strain JS42).